The sequence spans 388 residues: Na(+)/H(+) antiporter NhaA (388 aa).

The Cytoplasmic segment spans residues Met-1–Asp-11. A helical transmembrane segment spans residues Ala-12–Ser-31. The Periplasmic segment spans residues Gly-32–Asn-58. The helical transmembrane segment at Met-59–Lys-80 threads the bilayer. The Cytoplasmic portion of the chain corresponds to Arg-81–Phe-96. Residues Pro-97–Asn-116 traverse the membrane as a helical segment. Residues Tyr-117 to Thr-122 are Periplasmic-facing. Residues Arg-123–Ala-130 form a helical membrane-spanning segment. At Ala-131–Ile-154 the chain is on the cytoplasmic side. The helical transmembrane segment at Phe-155–Thr-176 threads the bilayer. Residues Asn-177–Ser-180 lie on the Periplasmic side of the membrane. Residues Met-181–Cys-200 form a helical membrane-spanning segment. Residues Gly-201–Arg-204 lie on the Cytoplasmic side of the membrane. The chain crosses the membrane as a helical span at residues Thr-205–Ser-222. Residue Gly-223 is a topological domain, periplasmic. The helical transmembrane segment at Val-224–Phe-236 threads the bilayer. Residues Ile-237–His-253 are Cytoplasmic-facing. The chain crosses the membrane as a helical span at residues Val-254–Ala-272. Topologically, residues Gly-273–Ser-286 are periplasmic. Residues Ile-287–Leu-310 traverse the membrane as a helical segment. The Cytoplasmic segment spans residues Ala-311–Phe-339. The chain crosses the membrane as a helical span at residues Thr-340–Phe-350. Topologically, residues Gly-351–Leu-357 are periplasmic. Residues Ile-358–Leu-380 form a helical membrane-spanning segment. Topologically, residues Arg-381–Val-388 are cytoplasmic.

This sequence belongs to the NhaA Na(+)/H(+) (TC 2.A.33) antiporter family.

Its subcellular location is the cell inner membrane. The enzyme catalyses Na(+)(in) + 2 H(+)(out) = Na(+)(out) + 2 H(+)(in). In terms of biological role, na(+)/H(+) antiporter that extrudes sodium in exchange for external protons. This is Na(+)/H(+) antiporter NhaA from Shigella flexneri.